The sequence spans 142 residues: Transcriptional regulator MraZ (142 aa).

SpoVT-AbrB domains follow at residues 5–47 (EYNH…PMEE) and 76–119 (ANEI…SREK).

The protein belongs to the MraZ family. In terms of assembly, forms oligomers.

The protein resides in the cytoplasm. Its subcellular location is the nucleoid. The protein is Transcriptional regulator MraZ of Clostridium tetani (strain Massachusetts / E88).